Consider the following 234-residue polypeptide: Multicopy suppressor of SEC21 protein 27 (234 aa).

The Cytoplasmic segment spans residues 1-47 (MQTPLESTDVKLDTLNEPSAHLIEKNVALPKDIFRSYLSYWIYEIAR). Residue T3 is modified to Phosphothreonine. A helical transmembrane segment spans residues 48-68 (YTPVMILSLVIGVLVLLIIFF). Topologically, residues 69–72 (NDNE) are extracellular. The chain crosses the membrane as a helical span at residues 73–93 (ACVFNSAYYAYLSLVVLLIIL). Residues 94-234 (GDGNPKLVSR…NIDALLKKTE (141 aa)) are Cytoplasmic-facing. A COPI binding region spans residues 231–234 (KKTE).

The protein belongs to the DUP/COS family. As to quaternary structure, interacts with MST28. Binds to coatomer proteins of COPI and SEC23/SEC24 of COPII coated vesicles.

It localises to the endoplasmic reticulum. The protein resides in the golgi apparatus. It is found in the cytoplasmic vesicle. The protein localises to the COPI-coated vesicle membrane. Its subcellular location is the COPII-coated vesicle membrane. Involved in protein trafficking vesicle formation, probably by stabilizing of coatomer at the Golgi membrane and thus allowing the efficient formation of COPI coated vesicles. In Saccharomyces cerevisiae (strain ATCC 204508 / S288c) (Baker's yeast), this protein is Multicopy suppressor of SEC21 protein 27 (MST27).